We begin with the raw amino-acid sequence, 352 residues long: Extracellular minor metalloprotease (352 aa).

Disordered regions lie at residues 41–86 (GNKP…QPRR) and 144–164 (TARSSTVSPSPSTLVGHELTH). A compositionally biased stretch (basic and acidic residues) spans 48-57 (PTEKNARAGE). 2 stretches are compositionally biased toward low complexity: residues 71–85 (ARQTGAQGGAAQQPR) and 144–156 (TARSSTVSPSPST). Zn(2+) is bound at residue histidine 160. Glutamate 161 is a catalytic residue. Zn(2+) contacts are provided by histidine 164 and glutamate 184. The active-site Proton donor is histidine 262. The disordered stretch occupies residues 303 to 325 (TPTSDHLRPRHGETRAGLRTKRG). Residues 304–325 (PTSDHLRPRHGETRAGLRTKRG) are compositionally biased toward basic and acidic residues.

It belongs to the peptidase M4 family. Zn(2+) is required as a cofactor.

The protein resides in the secreted. The sequence is that of Extracellular minor metalloprotease (smp) from Serratia marcescens (strain ATCC 21074 / E-15).